Consider the following 80-residue polypeptide: CLAVATA3/ESR (CLE)-related protein 40 (80 aa).

A signal peptide spans 1-25; that stretch reads MAAMKYKGSVFIILVILLLSSSLLA. Residues 45 to 80 are disordered; it reads MKKEKKIDGGTANEVEERQVPTGSDPLHHKHIPFTP. Proline 65 carries the hydroxyproline modification.

It belongs to the CLV3/ESR signal peptide family. Mostly expressed at low levels in stems and apex, and, to a lower extent, in roots, seedlings, leaves, flowers, siliques and pollen.

It localises to the secreted. It is found in the extracellular space. Functionally, extracellular signal peptide secreted by differentiated root cells that regulates root cell fate. Acts with ACR4 as a ligand-receptor pair in a signal transduction pathway, coordinating movement of the root tip and organization of cell divisions in the root meristem. Promotes cell differentiation in the distal root meristem in a dose-dependent manner, especially the transition from columella stem cells (CSC) daughters into columella cells (CCs). Induces ACR4 expression in root quiescent center (QC). Involved in WUX5 QC-specific expression pattern regulation. Regulates the transition of protophloem cells from proliferation to differentiation, thus impinging on postembryonic growth capacity of the root meristem; this signaling pathway requires CRN and CLV2. This chain is CLAVATA3/ESR (CLE)-related protein 40, found in Arabidopsis thaliana (Mouse-ear cress).